Reading from the N-terminus, the 100-residue chain is Urease subunit gamma (100 aa).

Belongs to the urease gamma subunit family. In terms of assembly, heterotrimer of UreA (gamma), UreB (beta) and UreC (alpha) subunits. Three heterotrimers associate to form the active enzyme.

It is found in the cytoplasm. It catalyses the reaction urea + 2 H2O + H(+) = hydrogencarbonate + 2 NH4(+). Its pathway is nitrogen metabolism; urea degradation; CO(2) and NH(3) from urea (urease route): step 1/1. Expression of the urease operon increases the likelihood of bacterial survival by contributing to acid resistance in vitro and in vivo in BALB/c mice. Y.enterocolitica enters the body via an oral path and must survive the acidic stomach before being able to colonize the intestinal mucosa. The chain is Urease subunit gamma from Yersinia enterocolitica.